Here is a 139-residue protein sequence, read N- to C-terminus: Histone H2B.11 (139 aa).

Over residues 1 to 39 (MAPKAEKKPAEKKPVEEKAEKKPKAEKRVPGAKEGGGEK) the composition is skewed to basic and acidic residues. The disordered stretch occupies residues 1–47 (MAPKAEKKPAEKKPVEEKAEKKPKAEKRVPGAKEGGGEKKGKKKAKK). An N6-acetyllysine mark is found at lysine 7 and lysine 27. Lysine 135 participates in a covalent cross-link: Glycyl lysine isopeptide (Lys-Gly) (interchain with G-Cter in ubiquitin).

The protein belongs to the histone H2B family. As to quaternary structure, the nucleosome is a histone octamer containing two molecules each of H2A, H2B, H3 and H4 assembled in one H3-H4 heterotetramer and two H2A-H2B heterodimers. The octamer wraps approximately 147 bp of DNA. Post-translationally, can be acetylated to form H2BK6ac and H2BK33ac. In terms of processing, monoubiquitinated by BRE1 to form H2BK143ub1 and deubiquitinated by UBP26. Required for heterochromatic histone H3 di- and trimethylation at H3K4me. May give a specific tag for epigenetic transcriptional activation.

Its subcellular location is the nucleus. It is found in the chromosome. Its function is as follows. Core component of nucleosome. Nucleosomes wrap and compact DNA into chromatin, limiting DNA accessibility to the cellular machineries which require DNA as a template. Histones thereby play a central role in transcription regulation, DNA repair, DNA replication and chromosomal stability. DNA accessibility is regulated via a complex set of post-translational modifications of histones, also called histone code, and nucleosome remodeling. The protein is Histone H2B.11 (H2B.11) of Oryza sativa subsp. indica (Rice).